Here is a 447-residue protein sequence, read N- to C-terminus: Dihydroorotase (447 aa).

Residues H84 and H86 each contribute to the Zn(2+) site. Substrate contacts are provided by residues H86–R88 and N118. Zn(2+)-binding residues include D174, H201, and H255. N301 serves as a coordination point for substrate. D328 is a Zn(2+) binding site. The active site involves D328. Substrate is bound by residues H332 and F346–G347.

It belongs to the metallo-dependent hydrolases superfamily. DHOase family. Class I DHOase subfamily. Zn(2+) is required as a cofactor.

It carries out the reaction (S)-dihydroorotate + H2O = N-carbamoyl-L-aspartate + H(+). It participates in pyrimidine metabolism; UMP biosynthesis via de novo pathway; (S)-dihydroorotate from bicarbonate: step 3/3. Its function is as follows. Catalyzes the reversible cyclization of carbamoyl aspartate to dihydroorotate. The sequence is that of Dihydroorotase from Anaplasma phagocytophilum (strain HZ).